We begin with the raw amino-acid sequence, 679 residues long: Glycine--tRNA ligase beta subunit (679 aa).

This sequence belongs to the class-II aminoacyl-tRNA synthetase family. As to quaternary structure, tetramer of two alpha and two beta subunits.

Its subcellular location is the cytoplasm. It carries out the reaction tRNA(Gly) + glycine + ATP = glycyl-tRNA(Gly) + AMP + diphosphate. The chain is Glycine--tRNA ligase beta subunit from Streptococcus gordonii (strain Challis / ATCC 35105 / BCRC 15272 / CH1 / DL1 / V288).